We begin with the raw amino-acid sequence, 67 residues long: Large ribosomal subunit protein bL35 (67 aa).

The protein belongs to the bacterial ribosomal protein bL35 family.

The sequence is that of Large ribosomal subunit protein bL35 from Sinorhizobium medicae (strain WSM419) (Ensifer medicae).